Reading from the N-terminus, the 76-residue chain is UPF0346 protein OEOE_1017 (76 aa).

Belongs to the UPF0346 family.

The polypeptide is UPF0346 protein OEOE_1017 (Oenococcus oeni (strain ATCC BAA-331 / PSU-1)).